The following is a 199-amino-acid chain: Translation machinery-associated protein 22 (199 aa).

Residues 97-168 (VVIRREARTK…EVEAYIHALL (72 aa)) form the SUI1 domain.

The protein belongs to the DENR family. In terms of assembly, interacts with the 40S ribosomal subunit.

Its subcellular location is the cytoplasm. This Eremothecium gossypii (strain ATCC 10895 / CBS 109.51 / FGSC 9923 / NRRL Y-1056) (Yeast) protein is Translation machinery-associated protein 22 (TMA22).